Consider the following 422-residue polypeptide: Aspartate--tRNA(Asp/Asn) ligase (422 aa).

E158 serves as a coordination point for L-aspartate. The aspartate stretch occupies residues 180–183; the sequence is QLYK. R201 contributes to the L-aspartate binding site. ATP-binding positions include 201-203, 209-211, and E345; these read RME and RHL. L-aspartate-binding residues include S348 and R352. ATP is bound at residue 393-396; it reads GAER.

Belongs to the class-II aminoacyl-tRNA synthetase family. Type 2 subfamily. In terms of assembly, homodimer. Makes part of a ribonucleoprotein particle (RNP) called transamidosome that allows channelling of the aa-tRNA from non-discriminating aspartyl-tRNA synthetase active site to the GatCAB amidotransferase site. The transamidosome complex is formed by two GatCABs, one dimeric ND-AspRSs and two tRNAs(Asn) molecules.

It localises to the cytoplasm. The catalysed reaction is tRNA(Asx) + L-aspartate + ATP = L-aspartyl-tRNA(Asx) + AMP + diphosphate. Functionally, aspartyl-tRNA synthetase with relaxed tRNA specificity since it is able to aspartylate not only its cognate tRNA(Asp) but also tRNA(Asn) with similar efficiencies. Reaction proceeds in two steps: L-aspartate is first activated by ATP to form Asp-AMP and then transferred to the acceptor end of tRNA(Asp/Asn). This is Aspartate--tRNA(Asp/Asn) ligase (aspS2) from Thermus thermophilus (strain ATCC 27634 / DSM 579 / HB8).